The sequence spans 228 residues: Heat shock 70-related protein 4 (228 aa).

The interval 57 to 80 is disordered; that stretch reads RWHEPPGNTVFDEAHDRPQVRRPD. Basic and acidic residues predominate over residues 68 to 80; the sequence is DEAHDRPQVRRPD.

Belongs to the heat shock protein 70 family.

This Leishmania major protein is Heat shock 70-related protein 4 (HSP70.4).